The primary structure comprises 1464 residues: Glutamate receptor ionotropic, NMDA 2A (1464 aa).

A signal peptide spans 1 to 22; it reads MGRVGYWTLLVLPALLVWRGPA. Residues 23–556 lie on the Extracellular side of the membrane; the sequence is PSAAAEKGPP…SAFLEPFSAS (534 aa). His-44 is a Zn(2+) binding site. N-linked (GlcNAc...) asparagine glycosylation occurs at Asn-75. A disulfide bond links Cys-87 and Cys-320. Zn(2+)-binding residues include His-128, Glu-266, and Asp-282. Residues Asn-340, Asn-380, Asn-443, and Asn-444 are each glycosylated (N-linked (GlcNAc...) asparagine). 2 cysteine pairs are disulfide-bonded: Cys-429–Cys-455 and Cys-436–Cys-456. L-glutamate is bound by residues Ser-511, Thr-513, and Arg-518. A glycan (N-linked (GlcNAc...) asparagine) is linked at Asn-541. A helical membrane pass occupies residues 557 to 576; sequence VWVMMFVMLLIVSAIAVFVF. Over 577–600 the chain is Cytoplasmic; the sequence is EYFSPVGYNRNLAKGKAPHGPSFT. A pore-forming region spans residues 599–620; it reads FTIGKAIWLLWGLVFNNSVPVQ. Residues 601-615 constitute an intramembrane region (discontinuously helical); the sequence is IGKAIWLLWGLVFNN. The Cytoplasmic segment spans residues 616–625; it reads SVPVQNPKGT. Residues 626–646 form a helical membrane-spanning segment; that stretch reads TSKIMVSVWAFFAVIFLASYT. The Extracellular portion of the chain corresponds to 647–814; the sequence is ANLAAFMIQE…NEVMSSQLDI (168 aa). A glycan (N-linked (GlcNAc...) asparagine) is linked at Asn-687. Positions 689, 690, and 731 each coordinate L-glutamate. A disulfide bridge connects residues Cys-745 and Cys-800. Residues 815-835 form a helical membrane-spanning segment; the sequence is DNMAGVFYMLAAAMALSLITF. Residues 836–1464 lie on the Cytoplasmic side of the membrane; the sequence is IWEHLFYWKL…KKMPSIESDV (629 aa). Residues Ser-882, Ser-890, and Ser-929 each carry the phosphoserine modification. Polar residues-rich tracts occupy residues 997-1010 and 1023-1032; these read EVAV…NSRP and QDSLSQNPVS. Residues 997–1083 form a disordered region; that stretch reads EVAVSTESKA…PDNSKNHKTK (87 aa). Residue Ser-1025 is modified to Phosphoserine. Basic and acidic residues-rich tracts occupy residues 1033-1043 and 1052-1061; these read QRDEATAENRT and LPEEMAHSDI. A phosphoserine mark is found at Ser-1059 and Ser-1062. Basic and acidic residues predominate over residues 1070–1083; sequence CHREPDNSKNHKTK. 2 positions are modified to phosphoserine: Ser-1198 and Ser-1291. The disordered stretch occupies residues 1335–1372; the sequence is KLSGKKSSLFPQGLEDSKRSKSLLPDHTSDNPFLHSHR. The PDZ-binding signature appears at 1462–1464; the sequence is SDV.

The protein belongs to the glutamate-gated ion channel (TC 1.A.10.1) family. NR2A/GRIN2A subfamily. Heterotetramer. Forms heterotetrameric channels composed of two GluN1/zeta subunits (GRIN1), and two identical GluN2/epsilon subunits (GRIN2A, GRIN2B, GRIN2C or GRIN2D) or GluN3 subunits (GRIN3A or GRIN3B) (in vitro). Can also form heterotetrameric channels that contain at least two GluN1 subunits and at least two different GluN2 subunits (or a combination of one GluN2 and one GluN3 subunits) (in vitro). In vivo, the subunit composition may depend on the expression levels of the different subunits. Found in a complex with GRIN1, GRIN3A and PPP2CB. Found in a complex with GRIN1 and GRIN3B. Interacts with AIP1. Interacts with HIP1 and NETO1. Interacts with SNX27 (via PDZ domain); the interaction is required for recycling to the plasma membrane when endocytosed and prevent degradation in lysosomes. Interacts with PDZ domains of PATJ and DLG4. Interacts with LRFN2. Interacts with RPH3A and DLG4; this ternary complex regulates NMDA receptor composition at postsynaptic membranes. Interacts with SORCS2. Interacts with ARC; preventing ARC oligomerization. Interacts (via the extreme C-terminus) with FRMPD2 (the second PDZ domain); the interaction is direct and is likely to promote NMDAR-mediated neural signal transmission. GRIN2A binds FRMPD2 with lower affinity than GRIN2B.

It localises to the cell projection. The protein resides in the dendritic spine. The protein localises to the cell membrane. It is found in the synapse. Its subcellular location is the postsynaptic cell membrane. It localises to the cytoplasmic vesicle membrane. It carries out the reaction Ca(2+)(in) = Ca(2+)(out). The enzyme catalyses Na(+)(in) = Na(+)(out). It catalyses the reaction K(+)(in) = K(+)(out). Its activity is regulated as follows. NMDA glutamate receptor activity is inhibited by endogenous Mg(2+) in a voltage-dependent manner. NMDA glutamate receptor activity is inhibited by endogenous Zn(2+). NMDA glutamate receptor activity is inhibited by endogenous protons. In terms of biological role, component of N-methyl-D-aspartate (NMDA) receptors (NMDARs) that function as heterotetrameric, ligand-gated cation channels with high calcium permeability and voltage-dependent block by Mg(2+). NMDARs participate in synaptic plasticity for learning and memory formation by contributing to the slow phase of excitatory postsynaptic current, long-term synaptic potentiation, and learning. Channel activation requires binding of the neurotransmitter L-glutamate to the GluN2 subunit, glycine or D-serine binding to the GluN1 subunit, plus membrane depolarization to eliminate channel inhibition by Mg(2+). NMDARs mediate simultaneously the potasium efflux and the influx of calcium and sodium. Each GluN2 subunit confers differential attributes to channel properties, including activation, deactivation and desensitization kinetics, pH sensitivity, Ca2(+) permeability, and binding to allosteric modulators. Participates in the synaptic plasticity regulation through activation by the L-glutamate releaseed by BEST1, into the synaptic cleft, upon F2R/PAR-1 activation in astrocyte. This Homo sapiens (Human) protein is Glutamate receptor ionotropic, NMDA 2A.